The primary structure comprises 232 residues: Phosphatidylserine decarboxylase proenzyme (232 aa).

The Schiff-base intermediate with substrate; via pyruvic acid role is filled by serine 190. At serine 190 the chain carries Pyruvic acid (Ser); by autocatalysis.

It belongs to the phosphatidylserine decarboxylase family. PSD-A subfamily. In terms of assembly, heterodimer of a large membrane-associated beta subunit and a small pyruvoyl-containing alpha subunit. It depends on pyruvate as a cofactor. Is synthesized initially as an inactive proenzyme. Formation of the active enzyme involves a self-maturation process in which the active site pyruvoyl group is generated from an internal serine residue via an autocatalytic post-translational modification. Two non-identical subunits are generated from the proenzyme in this reaction, and the pyruvate is formed at the N-terminus of the alpha chain, which is derived from the carboxyl end of the proenzyme. The post-translation cleavage follows an unusual pathway, termed non-hydrolytic serinolysis, in which the side chain hydroxyl group of the serine supplies its oxygen atom to form the C-terminus of the beta chain, while the remainder of the serine residue undergoes an oxidative deamination to produce ammonia and the pyruvoyl prosthetic group on the alpha chain.

Its subcellular location is the cell membrane. It catalyses the reaction a 1,2-diacyl-sn-glycero-3-phospho-L-serine + H(+) = a 1,2-diacyl-sn-glycero-3-phosphoethanolamine + CO2. It participates in phospholipid metabolism; phosphatidylethanolamine biosynthesis; phosphatidylethanolamine from CDP-diacylglycerol: step 2/2. In terms of biological role, catalyzes the formation of phosphatidylethanolamine (PtdEtn) from phosphatidylserine (PtdSer). The protein is Phosphatidylserine decarboxylase proenzyme of Bradyrhizobium sp. (strain ORS 278).